Here is a 492-residue protein sequence, read N- to C-terminus: Probable cobyric acid synthase (492 aa).

The GATase cobBQ-type domain maps to 248–434; the sequence is PVRIAVVRLP…MHGLFQNPGA (187 aa). The Nucleophile role is filled by Cys327. Residue His426 is part of the active site.

Belongs to the CobB/CobQ family. CobQ subfamily.

The protein operates within cofactor biosynthesis; adenosylcobalamin biosynthesis. Functionally, catalyzes amidations at positions B, D, E, and G on adenosylcobyrinic A,C-diamide. NH(2) groups are provided by glutamine, and one molecule of ATP is hydrogenolyzed for each amidation. The protein is Probable cobyric acid synthase of Methanoculleus marisnigri (strain ATCC 35101 / DSM 1498 / JR1).